Reading from the N-terminus, the 308-residue chain is Phosphoribosylaminoimidazole-succinocarboxamide synthase (308 aa).

Belongs to the SAICAR synthetase family.

The enzyme catalyses 5-amino-1-(5-phospho-D-ribosyl)imidazole-4-carboxylate + L-aspartate + ATP = (2S)-2-[5-amino-1-(5-phospho-beta-D-ribosyl)imidazole-4-carboxamido]succinate + ADP + phosphate + 2 H(+). It functions in the pathway purine metabolism; IMP biosynthesis via de novo pathway; 5-amino-1-(5-phospho-D-ribosyl)imidazole-4-carboxamide from 5-amino-1-(5-phospho-D-ribosyl)imidazole-4-carboxylate: step 1/2. The sequence is that of Phosphoribosylaminoimidazole-succinocarboxamide synthase from Xanthomonas euvesicatoria pv. vesicatoria (strain 85-10) (Xanthomonas campestris pv. vesicatoria).